A 491-amino-acid polypeptide reads, in one-letter code: Glutamyl-tRNA(Gln) amidotransferase subunit A (491 aa).

Active-site charge relay system residues include K79 and S154. Catalysis depends on S178, which acts as the Acyl-ester intermediate.

It belongs to the amidase family. GatA subfamily. As to quaternary structure, heterotrimer of A, B and C subunits.

It catalyses the reaction L-glutamyl-tRNA(Gln) + L-glutamine + ATP + H2O = L-glutaminyl-tRNA(Gln) + L-glutamate + ADP + phosphate + H(+). Allows the formation of correctly charged Gln-tRNA(Gln) through the transamidation of misacylated Glu-tRNA(Gln) in organisms which lack glutaminyl-tRNA synthetase. The reaction takes place in the presence of glutamine and ATP through an activated gamma-phospho-Glu-tRNA(Gln). In Synechococcus sp. (strain CC9605), this protein is Glutamyl-tRNA(Gln) amidotransferase subunit A.